Here is a 409-residue protein sequence, read N- to C-terminus: Endoglucanase B (409 aa).

Substrate-binding positions include histidine 61, 65-66 (WY), tyrosine 92, and histidine 127. Residue glutamate 165 is the Proton donor of the active site. Tyrosine 228 contacts substrate. The active-site Nucleophile is glutamate 254. Residues 260-261 (AT), tryptophan 288, and 293-295 (KDE) contribute to the substrate site. The tract at residues 326-372 (IRESATTPPSDPTPPSDPDPGEPEPDPGEPDPTPPSDPGDYPAWDPN) is disordered. A compositionally biased stretch (pro residues) spans 334-343 (PSDPTPPSDP). Residues 344-354 (DPGEPEPDPGE) show a composition bias toward acidic residues.

It belongs to the glycosyl hydrolase 5 (cellulase A) family.

It carries out the reaction Endohydrolysis of (1-&gt;4)-beta-D-glucosidic linkages in cellulose, lichenin and cereal beta-D-glucans.. The chain is Endoglucanase B (celB) from Evansella cellulosilytica (strain ATCC 21833 / DSM 2522 / FERM P-1141 / JCM 9156 / N-4) (Bacillus cellulosilyticus).